The sequence spans 294 residues: Homeobox-leucine zipper protein ATHB-16 (294 aa).

The span at 1 to 20 (MKRLSSSDSMCGLISTSTDE) shows a compositional bias: polar residues. Residues 1–31 (MKRLSSSDSMCGLISTSTDEQSPRGYGSNYQ) form a disordered region. The homeobox DNA-binding region spans 56–115 (LSEKKRRLKVDQVKALEKNFELENKLEPERKTKLAQELGLQPRQVAVWFQNRRARWKTKQ). Positions 116–151 (LEKDYGVLKGQYDSLRHNFDSLRRDNDSLLQEISKI) are leucine-zipper. The segment covering 219–238 (SSDSCDSSAVLNDETSSDNG) has biased composition (polar residues). The tract at residues 219–241 (SSDSCDSSAVLNDETSSDNGRLT) is disordered.

This sequence belongs to the HD-ZIP homeobox family. Class I subfamily. In terms of tissue distribution, widely expressed with a lower level in siliques.

It localises to the nucleus. Functionally, probable transcription factor that may function as a negative regulator of the flowering time response to photoperiod. May act to repress cell expansion during plant development. This is Homeobox-leucine zipper protein ATHB-16 (ATHB-16) from Arabidopsis thaliana (Mouse-ear cress).